The chain runs to 138 residues: Large ribosomal subunit protein uL16 (138 aa).

Positions 1-16 are enriched in basic residues; that stretch reads MLIPKRVKFRRQHRPN. The disordered stretch occupies residues 1–25; it reads MLIPKRVKFRRQHRPNRSGMSKGGN.

Belongs to the universal ribosomal protein uL16 family. In terms of assembly, part of the 50S ribosomal subunit.

Its function is as follows. Binds 23S rRNA and is also seen to make contacts with the A and possibly P site tRNAs. The protein is Large ribosomal subunit protein uL16 of Corynebacterium urealyticum (strain ATCC 43042 / DSM 7109).